Here is a 309-residue protein sequence, read N- to C-terminus: Porphobilinogen deaminase (309 aa).

Cys241 is modified (S-(dipyrrolylmethanemethyl)cysteine).

The protein belongs to the HMBS family. In terms of assembly, monomer. Dipyrromethane is required as a cofactor.

It catalyses the reaction 4 porphobilinogen + H2O = hydroxymethylbilane + 4 NH4(+). It participates in porphyrin-containing compound metabolism; protoporphyrin-IX biosynthesis; coproporphyrinogen-III from 5-aminolevulinate: step 2/4. Tetrapolymerization of the monopyrrole PBG into the hydroxymethylbilane pre-uroporphyrinogen in several discrete steps. This is Porphobilinogen deaminase from Bacillus mycoides (strain KBAB4) (Bacillus weihenstephanensis).